We begin with the raw amino-acid sequence, 375 residues long: Queuine tRNA-ribosyltransferase (375 aa).

Asp93 acts as the Proton acceptor in catalysis. Substrate is bound by residues 93-97 (DSGGY), Asp147, Gln194, and Gly221. The RNA binding stretch occupies residues 252–258 (GVGKPDD). The active-site Nucleophile is the Asp271. Residues 276 to 280 (TRSGR) form an RNA binding; important for wobble base 34 recognition region. Residues Cys309, Cys311, Cys314, and His340 each contribute to the Zn(2+) site.

Belongs to the queuine tRNA-ribosyltransferase family. Homodimer. Within each dimer, one monomer is responsible for RNA recognition and catalysis, while the other monomer binds to the replacement base PreQ1. Zn(2+) is required as a cofactor.

The catalysed reaction is 7-aminomethyl-7-carbaguanine + guanosine(34) in tRNA = 7-aminomethyl-7-carbaguanosine(34) in tRNA + guanine. It functions in the pathway tRNA modification; tRNA-queuosine biosynthesis. Its function is as follows. Catalyzes the base-exchange of a guanine (G) residue with the queuine precursor 7-aminomethyl-7-deazaguanine (PreQ1) at position 34 (anticodon wobble position) in tRNAs with GU(N) anticodons (tRNA-Asp, -Asn, -His and -Tyr). Catalysis occurs through a double-displacement mechanism. The nucleophile active site attacks the C1' of nucleotide 34 to detach the guanine base from the RNA, forming a covalent enzyme-RNA intermediate. The proton acceptor active site deprotonates the incoming PreQ1, allowing a nucleophilic attack on the C1' of the ribose to form the product. After dissociation, two additional enzymatic reactions on the tRNA convert PreQ1 to queuine (Q), resulting in the hypermodified nucleoside queuosine (7-(((4,5-cis-dihydroxy-2-cyclopenten-1-yl)amino)methyl)-7-deazaguanosine). The chain is Queuine tRNA-ribosyltransferase from Sphingopyxis alaskensis (strain DSM 13593 / LMG 18877 / RB2256) (Sphingomonas alaskensis).